The primary structure comprises 596 residues: Elongation factor 4 (596 aa).

The region spanning 2–184 is the tr-type G domain; that stretch reads KHIRNFSIIA…VIVAQIPPPE (183 aa). Residues 14 to 19 and 131 to 134 each bind GTP; these read DHGKST and NKID.

It belongs to the TRAFAC class translation factor GTPase superfamily. Classic translation factor GTPase family. LepA subfamily.

The protein resides in the cell inner membrane. It carries out the reaction GTP + H2O = GDP + phosphate + H(+). In terms of biological role, required for accurate and efficient protein synthesis under certain stress conditions. May act as a fidelity factor of the translation reaction, by catalyzing a one-codon backward translocation of tRNAs on improperly translocated ribosomes. Back-translocation proceeds from a post-translocation (POST) complex to a pre-translocation (PRE) complex, thus giving elongation factor G a second chance to translocate the tRNAs correctly. Binds to ribosomes in a GTP-dependent manner. In Shewanella woodyi (strain ATCC 51908 / MS32), this protein is Elongation factor 4.